The sequence spans 245 residues: tRNA pseudouridine synthase A 2 (245 aa).

D53 (nucleophile) is an active-site residue. Y111 serves as a coordination point for substrate.

The protein belongs to the tRNA pseudouridine synthase TruA family. Homodimer.

It catalyses the reaction uridine(38/39/40) in tRNA = pseudouridine(38/39/40) in tRNA. In terms of biological role, formation of pseudouridine at positions 38, 39 and 40 in the anticodon stem and loop of transfer RNAs. The sequence is that of tRNA pseudouridine synthase A 2 from Bacillus cereus (strain ATCC 14579 / DSM 31 / CCUG 7414 / JCM 2152 / NBRC 15305 / NCIMB 9373 / NCTC 2599 / NRRL B-3711).